The chain runs to 486 residues: Fructose dehydrogenase cytochrome subunit (486 aa).

An N-terminal signal peptide occupies residues 1 to 25 (MRYFRPLSATAMTTVLLLAGTNVRA). 3 consecutive Cytochrome c domains span residues 38–142 (PSIS…MTEV), 186–294 (DDWN…RSVP), and 330–423 (TKTT…LSHF). Residues C52, C55, H56, C201, C204, H205, C343, C346, and H347 each contribute to the heme c site. Residues 458–478 (LLGTGGILGAILVVAGLWWLI) form a helical membrane-spanning segment.

As to quaternary structure, heterotrimer composed of FdhL, FdhS and FdhC. In terms of processing, binds 3 heme c groups covalently per subunit.

The protein resides in the cell membrane. Its function is as follows. Cytochrome subunit of fructose dehydrogenase, an enzyme that catalyzes the oxidation of D-fructose to produce 5-keto-D-fructose. In the complex, mediates both the electron transfer to ubiquinone and the anchoring of the complex to the membrane. This is Fructose dehydrogenase cytochrome subunit (fdhC) from Gluconobacter japonicus.